The chain runs to 298 residues: Protease HtpX homolog (298 aa).

The next 2 helical transmembrane spans lie at 16–36 and 38–58; these read VMFG…YLFW and SWVS…LIMI. His144 provides a ligand contact to Zn(2+). Residue Glu145 is part of the active site. A Zn(2+)-binding site is contributed by His148. The next 2 helical transmembrane spans lie at 159–179 and 197–217; these read IALA…NWFW and IIGL…ASIA. Glu226 is a binding site for Zn(2+).

This sequence belongs to the peptidase M48B family. It depends on Zn(2+) as a cofactor.

It is found in the cell membrane. The sequence is that of Protease HtpX homolog from Levilactobacillus brevis (strain ATCC 367 / BCRC 12310 / CIP 105137 / JCM 1170 / LMG 11437 / NCIMB 947 / NCTC 947) (Lactobacillus brevis).